The chain runs to 939 residues: UvrABC system protein A (939 aa).

Position 32–39 (32–39 (GLSGSGKS)) interacts with ATP. The C4-type zinc-finger motif lies at 252 to 279 (CPDCGISIGEISPSMFSFNAPFGKCDVC). 2 ABC transporter domains span residues 309–588 (WGEG…KESI) and 608–936 (AGKN…QYLK). Residue 640–647 (GVSGSGKS) coordinates ATP. The segment at 739–765 (CEACKGDGIVRIEMQFLSDVYVPCDVC) adopts a C4-type zinc-finger fold.

It belongs to the ABC transporter superfamily. UvrA family. In terms of assembly, forms a heterotetramer with UvrB during the search for lesions.

The protein localises to the cytoplasm. The UvrABC repair system catalyzes the recognition and processing of DNA lesions. UvrA is an ATPase and a DNA-binding protein. A damage recognition complex composed of 2 UvrA and 2 UvrB subunits scans DNA for abnormalities. When the presence of a lesion has been verified by UvrB, the UvrA molecules dissociate. The protein is UvrABC system protein A of Clostridium acetobutylicum (strain ATCC 824 / DSM 792 / JCM 1419 / IAM 19013 / LMG 5710 / NBRC 13948 / NRRL B-527 / VKM B-1787 / 2291 / W).